A 182-amino-acid chain; its full sequence is Heat shock protein beta-2 (182 aa).

The 109-residue stretch at 55–163 (PAGEGSRAGA…DTEVNEVYIS (109 aa)) folds into the sHSP domain.

This sequence belongs to the small heat shock protein (HSP20) family. Interacts with DMPK; may enhance its kinase activity. As to expression, expressed preferentially in skeletal muscle and heart but not in the lens.

It localises to the cytoplasm. Its subcellular location is the nucleus. In terms of biological role, may regulate the kinase DMPK. The polypeptide is Heat shock protein beta-2 (HSPB2) (Homo sapiens (Human)).